Consider the following 203-residue polypeptide: MQILLATVAAYLIGSVSFAVVVSAAMGLADPRSYGSKNPGATNVLRSGNKKAAILTLVGDAFKGWLAVWLVKRFGIGGEIGVALAAIAVFLGHLHPVFFRFQGGKGVATAAGVLLAVHPVLGLATALTWLIVAFFFRYSSLAALVAAVFAPIFDVFLFGTHDNPVAWAVLAMSVLLIWRHRSNISKLLAGEESRIGQKKKTGV.

The next 6 membrane-spanning stretches (helical) occupy residues 3-23 (ILLA…VVVS), 51-71 (KAAI…VWLV), 74-94 (FGIG…LGHL), 116-136 (AVHP…AFFF), 140-160 (SLAA…LFGT), and 164-178 (PVAW…LLIW).

It belongs to the PlsY family. Probably interacts with PlsX.

The protein resides in the cell inner membrane. It catalyses the reaction an acyl phosphate + sn-glycerol 3-phosphate = a 1-acyl-sn-glycero-3-phosphate + phosphate. It functions in the pathway lipid metabolism; phospholipid metabolism. Its function is as follows. Catalyzes the transfer of an acyl group from acyl-phosphate (acyl-PO(4)) to glycerol-3-phosphate (G3P) to form lysophosphatidic acid (LPA). This enzyme utilizes acyl-phosphate as fatty acyl donor, but not acyl-CoA or acyl-ACP. This Burkholderia mallei (strain ATCC 23344) protein is Glycerol-3-phosphate acyltransferase.